The primary structure comprises 98 residues: Biogenesis of lysosome-related organelles complex 1 subunit SNN1 (98 aa).

Residues 55 to 98 (MDEQELLQEEGSLKEELARVNQLKKRLDKLTELYAELARKCGAL) are a coiled coil.

It belongs to the SNAPIN family. Component of the biogenesis of lysosome-related organelles complex-1 (BLOC-1).

Its subcellular location is the endosome. Its function is as follows. Component of the biogenesis of lysosome-related organelles complex-1 (BLOC-1), a complex involved in endosomal cargo sorting. The chain is Biogenesis of lysosome-related organelles complex 1 subunit SNN1 (SNN1) from Eremothecium gossypii (strain ATCC 10895 / CBS 109.51 / FGSC 9923 / NRRL Y-1056) (Yeast).